A 184-amino-acid chain; its full sequence is Guanylate kinase (184 aa).

Residues 5–183 (KKLIIITGPS…TVKEVLKIIK (179 aa)) form the Guanylate kinase-like domain. 12–19 (GPSGVGKG) lines the ATP pocket.

Belongs to the guanylate kinase family.

It localises to the cytoplasm. The catalysed reaction is GMP + ATP = GDP + ADP. Essential for recycling GMP and indirectly, cGMP. The polypeptide is Guanylate kinase (Prochlorococcus marinus subsp. pastoris (strain CCMP1986 / NIES-2087 / MED4)).